The primary structure comprises 470 residues: Origin of replication complex subunit 4 (470 aa).

Residue 63–70 (GPRGCGKA) coordinates ATP.

The protein belongs to the ORC4 family. In terms of assembly, component of the origin recognition complex (ORC) composed of at least ORC1, ORC2, ORC3, ORC4, ORC5 and ORC6. ORC is regulated in a cell-cycle and development dependent manner. It is sequentially assembled at the exit from anaphase of mitosis and disassembled as cells enter S phase. In terms of tissue distribution, expressed in the shoot apical meristem (SAM), leaves, ears and roots (including root tips).

The protein resides in the nucleus. Functionally, component of the origin recognition complex (ORC) that binds origins of replication. DNA-binding is ATP-dependent. The specific DNA sequences that define origins of replication have not been identified yet. ORC is required to assemble the pre-replication complex necessary to initiate DNA replication. The protein is Origin of replication complex subunit 4 of Oryza sativa subsp. japonica (Rice).